The primary structure comprises 1218 residues: Formin-A (1218 aa).

Residues 1–108 (MADKLYQIKL…ILGEACNYSV (108 aa)) form the C2 domain. The 401-residue stretch at 139 to 539 (EEKKRHDEIQ…QISLRDKNIG (401 aa)) folds into the GBD/FH3 domain. Residues 563–638 (LKSQIESLKK…QLKLTQGTAK (76 aa)) are a coiled coil. A disordered region spans residues 634–762 (QGTAKPDSAA…KAAAPPRKEV (129 aa)). The span at 649-747 (APPPPPPPMT…FGKGPPPPPG (99 aa)) shows a compositional bias: pro residues. Residues 652 to 737 (PPPPPMTGGG…AGGPPPPPPP (86 aa)) enclose the FH1 domain. One can recognise an FH2 domain in the interval 759-1155 (RKEVPVPALK…IAKREAAKKL (397 aa)). Residues 1034–1061 (SLSQVQAEVATLRKEFVQVQKSIETLNS) are a coiled coil. 2 disordered regions span residues 1153–1179 (KKLKEEEDAKKKQLAEERKQKGETVEV) and 1198–1218 (KNRRRRARKTDQDSTIEPIDL). The DAD domain maps to 1174-1209 (GETVEVKESVVDDLLDTIASGDAFKNRRRRARKTDQ).

Belongs to the formin homology family. Diaphanous subfamily. In terms of assembly, interacts (via GBD/FH3 domain) with activated Rho-GTPases.

Its function is as follows. Formins play an important role in the nucleation of actin and the formation of linear actin filaments. In Dictyostelium discoideum (Social amoeba), this protein is Formin-A (forA).